The primary structure comprises 490 residues: Probable cytosol aminopeptidase (490 aa).

Mn(2+)-binding residues include Lys255 and Asp260. Residue Lys267 is part of the active site. Mn(2+)-binding residues include Asp278, Asp337, and Glu339. Arg341 is an active-site residue.

The protein belongs to the peptidase M17 family. Requires Mn(2+) as cofactor.

It is found in the cytoplasm. The catalysed reaction is Release of an N-terminal amino acid, Xaa-|-Yaa-, in which Xaa is preferably Leu, but may be other amino acids including Pro although not Arg or Lys, and Yaa may be Pro. Amino acid amides and methyl esters are also readily hydrolyzed, but rates on arylamides are exceedingly low.. The enzyme catalyses Release of an N-terminal amino acid, preferentially leucine, but not glutamic or aspartic acids.. Presumably involved in the processing and regular turnover of intracellular proteins. Catalyzes the removal of unsubstituted N-terminal amino acids from various peptides. The polypeptide is Probable cytosol aminopeptidase (Gluconobacter oxydans (strain 621H) (Gluconobacter suboxydans)).